We begin with the raw amino-acid sequence, 501 residues long: uncharacterized protein (501 aa).

In terms of domain architecture, BAR spans 14 to 237 (EKFGFDRQKT…GFSKKRDNVN (224 aa)). Thr-285 bears the Phosphothreonine mark. 2 disordered regions span residues 302-321 (IASS…DVSD) and 329-414 (SAVD…RSYS). A compositionally biased stretch (basic and acidic residues) spans 309–320 (QHTEDNYNKDVS). Polar residues predominate over residues 390-402 (SQCNVSPSPSNIS). Ser-414 carries the phosphoserine modification. One can recognise an SH3 domain in the interval 421 to 487 (SSRKVVRMKY…PSNYCVPAHP (67 aa)).

The protein localises to the cytoplasm. This is an uncharacterized protein from Schizosaccharomyces pombe (strain 972 / ATCC 24843) (Fission yeast).